A 182-amino-acid polypeptide reads, in one-letter code: Gas vesicle protein H1 (182 aa).

Acidic residues predominate over residues Met1 to Asp11. 2 disordered regions span residues Met1–Leu21 and Gly65–Ser106. A compositionally biased stretch (low complexity) spans Asp12–Leu21. The segment covering Thr92 to Thr101 has biased composition (basic and acidic residues).

It belongs to the gas vesicle GvpH family. GvpF to GvpM interact with each other in vitro, and may form multi-subunit complex(es). Interacts with GvpC1. Might interact with GvpA1.

It localises to the cytoplasm. It is found in the gas vesicle. Functionally, proteins GvpF to GvpM might be involved in nucleating gas vesicle formation. May be important for the stability of gas vesicles. Gas vesicles are hollow, gas filled proteinaceous nanostructures found in several microbial planktonic microorganisms. They allow positioning of halobacteria at the optimal depth for growth in the poorly aerated, shallow brine pools of their habitat. In terms of biological role, expression of a 9.5 kb p-vac DNA fragment containing 2 divergently transcribed regions (gvpD-gvpE-gvpF-gvpG-gvpH-gvpI-gvpJ-gvpK-gvpL-gvpM and gvpA-gvpC-gvpN-gvpO) allows H.volcanii to produce gas vesicles. A similar region restores gas vesicle production in H.halobium without the p-vac locus, but it still has the c-vac locus. The chain is Gas vesicle protein H1 (gvpH11) from Halobacterium salinarum (strain ATCC 700922 / JCM 11081 / NRC-1) (Halobacterium halobium).